The primary structure comprises 368 residues: MSGSIAPSSPGLTLPVWVAAAAKAALQVLLDEPFNAEQQLNQGSDRPSLQVPVCSAAPLSDGQALGISRCDPGPGLDLTRDLEVWVRVAWIATPQPVLELQPGEGVGRLGPEGDICLSGFARELLERNLLPLLPAGRGLMVQPILPRGRSLAQRTSNAAFGVVDGLALIGTQAEVQRSAAPDQLQEVLAELEARAADPAFQGRLVLVIGENGLDLARQQGLGPVLKVGNWVGPVLVAAAEAGVRDLLLLGYHGKLIKLAGGIFHTHHHLADGRLEVLVALGLDAGLSTAELLQCRGAASVEEAFQALDPDQARALGQHLAAIVEQRSHSYLARYGAWSMRIGAALFDRSRTLRWWGPEAEKRFFTLRD.

Belongs to the CbiD family.

The enzyme catalyses Co-precorrin-5B + S-adenosyl-L-methionine = Co-precorrin-6A + S-adenosyl-L-homocysteine. It functions in the pathway cofactor biosynthesis; adenosylcobalamin biosynthesis; cob(II)yrinate a,c-diamide from sirohydrochlorin (anaerobic route): step 6/10. Functionally, catalyzes the methylation of C-1 in cobalt-precorrin-5B to form cobalt-precorrin-6A. The chain is Cobalt-precorrin-5B C(1)-methyltransferase from Synechococcus sp. (strain CC9605).